The sequence spans 778 residues: Phosphoribosylformylglycinamidine synthase subunit PurL (778 aa).

The active site involves histidine 44. 2 residues coordinate ATP: tyrosine 47 and lysine 86. Glutamate 88 contacts Mg(2+). Substrate is bound by residues 89–92 (SHNH) and arginine 111. Histidine 90 functions as the Proton acceptor in the catalytic mechanism. Residues aspartate 112 and aspartate 265 each contribute to the Mg(2+) site. A substrate-binding site is contributed by 309–311 (ESQ). The tract at residues 455–474 (TRQPPGEGLPGRSGQAGPPK) is disordered. The ATP site is built by asparagine 518 and glycine 555. Asparagine 556 contacts Mg(2+). Serine 558 provides a ligand contact to substrate.

It belongs to the FGAMS family. As to quaternary structure, monomer. Part of the FGAM synthase complex composed of 1 PurL, 1 PurQ and 2 PurS subunits.

The protein localises to the cytoplasm. The catalysed reaction is N(2)-formyl-N(1)-(5-phospho-beta-D-ribosyl)glycinamide + L-glutamine + ATP + H2O = 2-formamido-N(1)-(5-O-phospho-beta-D-ribosyl)acetamidine + L-glutamate + ADP + phosphate + H(+). It functions in the pathway purine metabolism; IMP biosynthesis via de novo pathway; 5-amino-1-(5-phospho-D-ribosyl)imidazole from N(2)-formyl-N(1)-(5-phospho-D-ribosyl)glycinamide: step 1/2. In terms of biological role, part of the phosphoribosylformylglycinamidine synthase complex involved in the purines biosynthetic pathway. Catalyzes the ATP-dependent conversion of formylglycinamide ribonucleotide (FGAR) and glutamine to yield formylglycinamidine ribonucleotide (FGAM) and glutamate. The FGAM synthase complex is composed of three subunits. PurQ produces an ammonia molecule by converting glutamine to glutamate. PurL transfers the ammonia molecule to FGAR to form FGAM in an ATP-dependent manner. PurS interacts with PurQ and PurL and is thought to assist in the transfer of the ammonia molecule from PurQ to PurL. The protein is Phosphoribosylformylglycinamidine synthase subunit PurL of Symbiobacterium thermophilum (strain DSM 24528 / JCM 14929 / IAM 14863 / T).